A 251-amino-acid chain; its full sequence is Segregation and condensation protein A (251 aa).

This sequence belongs to the ScpA family. Component of a cohesin-like complex composed of ScpA, ScpB and the Smc homodimer, in which ScpA and ScpB bind to the head domain of Smc. The presence of the three proteins is required for the association of the complex with DNA.

Its subcellular location is the cytoplasm. In terms of biological role, participates in chromosomal partition during cell division. May act via the formation of a condensin-like complex containing Smc and ScpB that pull DNA away from mid-cell into both cell halves. This Bacillus velezensis (strain DSM 23117 / BGSC 10A6 / LMG 26770 / FZB42) (Bacillus amyloliquefaciens subsp. plantarum) protein is Segregation and condensation protein A.